Consider the following 1499-residue polypeptide: Pleiotropic ABC efflux transporter of multiple drugs CDR1 (1499 aa).

Residues Met-1 to Asp-11 show a composition bias toward basic and acidic residues. A disordered region spans residues Met-1–His-29. 3 N-linked (GlcNAc...) asparagine glycosylation sites follow: Asn-24, Asn-96, and Asn-99. The region spanning Val-146–Glu-399 is the ABC transporter 1 domain. Ser-307 carries the post-translational modification Phosphoserine. N-linked (GlcNAc...) asparagine glycosylation occurs at Asn-323. Ser-484 carries the phosphoserine modification. The helical transmembrane segment at Gly-510–Phe-530 threads the bilayer. An N-linked (GlcNAc...) asparagine glycan is attached at Asn-537. The next 5 membrane-spanning stretches (helical) occupy residues Ala-548–Phe-568, Val-597–Phe-617, Gly-622–Phe-642, Ala-654–Ile-674, and Gly-763–Glu-783. An N-linked (GlcNAc...) asparagine glycan is attached at Asn-813. The ABC transporter 2 domain occupies Phe-857–Gly-1099. Residue Gly-893 to Thr-900 participates in ATP binding. Residue Asn-1159 is glycosylated (N-linked (GlcNAc...) asparagine). Transmembrane regions (helical) follow at residues Tyr-1193–Phe-1213, Ala-1228–Val-1248, and Ile-1278–Phe-1298. Asn-1301 carries an N-linked (GlcNAc...) asparagine glycan. A run of 2 helical transmembrane segments spans residues Leu-1314–Ile-1334 and Ala-1342–Val-1362. The N-linked (GlcNAc...) asparagine glycan is linked to Asn-1412. A helical membrane pass occupies residues Trp-1466 to Leu-1486.

It belongs to the ABC transporter superfamily. Phosphorylated at Ser-307 and Ser-484. Ser-307 and Ser-484 are dephosphorylated on glucose depletion and independently rephosphorylated during glucose exposure or under stress.

The protein resides in the cell membrane. Inhibited by clorgyline. Inhibited by RC21v3, a 4-methoxy-2,3,6-trimethylbenzenesulphonyl derivative of the D-octapeptide D-FFKWQRRR, via the interaction with the ectodomain. FK506, enniatin, milbemycin alpha-11, and milbemycin beta-9 also inhibit CDR1 activity. Inhibited by milbemycin A3/A4 oxim derivatives. In terms of biological role, pleiotropic ABC efflux transporter that transports and confers resistance to structurally and functionally unrelated compounds including rhodamine 6G, Nile red, caspofungin, cycloheximide, or azoles such as fluconazole, itraconazole, ketoconazole, posaconazole, voriconazole, and isavuconazole. Chlorbromuron, itraconazole, yohimbine, ketoconazole, miconazole, clotrimazole, DE-11, tamoxifen, quinidine, verapamil can compete for rhodamine 6G's binding site(s) while compounds such as propanil, chloramphenicol, benomyl, voriconazole, tritylimidazole, ketoconazole, miconazole, tamoxifen, gefitinib shared binding site(s) with fluconazole. Nile red mediated efflux appears to be relatively more specific since only five compounds such as ZW3-12, rhodamine 123, miconazole, clotrimazole, and itraconazole can inhibit its accumulation. Does not use as substrates 4-nitroquinoline 1-oxide (4-NQO) and disulfiram. Does not play a role in the azole resistance in mature biofilms. This is Pleiotropic ABC efflux transporter of multiple drugs CDR1 from Candida glabrata (strain ATCC 2001 / BCRC 20586 / JCM 3761 / NBRC 0622 / NRRL Y-65 / CBS 138) (Yeast).